A 241-amino-acid polypeptide reads, in one-letter code: Methylthioribulose-1-phosphate dehydratase (241 aa).

Cysteine 102 is a binding site for substrate. Histidine 120, histidine 122, and histidine 199 together coordinate Zn(2+).

It belongs to the aldolase class II family. MtnB subfamily. Zn(2+) serves as cofactor.

It localises to the cytoplasm. The catalysed reaction is 5-(methylsulfanyl)-D-ribulose 1-phosphate = 5-methylsulfanyl-2,3-dioxopentyl phosphate + H2O. It functions in the pathway amino-acid biosynthesis; L-methionine biosynthesis via salvage pathway; L-methionine from S-methyl-5-thio-alpha-D-ribose 1-phosphate: step 2/6. In terms of biological role, catalyzes the dehydration of methylthioribulose-1-phosphate (MTRu-1-P) into 2,3-diketo-5-methylthiopentyl-1-phosphate (DK-MTP-1-P). The sequence is that of Methylthioribulose-1-phosphate dehydratase from Coprinopsis cinerea (strain Okayama-7 / 130 / ATCC MYA-4618 / FGSC 9003) (Inky cap fungus).